A 273-amino-acid polypeptide reads, in one-letter code: Large ribosomal subunit protein uL2 (273 aa).

The interval 228-273 is disordered; it reads VDHPHGGGEGKTSGGRHPVTPWGFPTKGKKTRKNKRTSKFIVKKRK. A compositionally biased stretch (basic residues) spans 254–273; the sequence is KGKKTRKNKRTSKFIVKKRK.

The protein belongs to the universal ribosomal protein uL2 family. In terms of assembly, part of the 50S ribosomal subunit. Forms a bridge to the 30S subunit in the 70S ribosome.

Its function is as follows. One of the primary rRNA binding proteins. Required for association of the 30S and 50S subunits to form the 70S ribosome, for tRNA binding and peptide bond formation. It has been suggested to have peptidyltransferase activity; this is somewhat controversial. Makes several contacts with the 16S rRNA in the 70S ribosome. This is Large ribosomal subunit protein uL2 from Rickettsia peacockii (strain Rustic).